Here is a 160-residue protein sequence, read N- to C-terminus: Major pollen allergen Bet v 1-F/I (160 aa).

Brassinolide contacts are provided by Lys55, Tyr82, Tyr84, and Asn101.

The protein belongs to the BetVI family.

It is found in the cytoplasm. Its function is as follows. May be a general steroid carrier protein. The sequence is that of Major pollen allergen Bet v 1-F/I (BETV1F) from Betula pendula (European white birch).